The primary structure comprises 838 residues: Multiphosphoryl transfer protein (838 aa).

One can recognise a PTS EIIA type-2 domain in the interval Ala7 to Asp147. The active-site Tele-phosphohistidine intermediate; for EIIA activity is the His67. A Phosphohistidine; by HPr modification is found at His67. Residues Ala161–Glu253 form the HPr domain. Catalysis depends on His175, which acts as the Pros-phosphohistidine intermediate; for HPr activity. A Phosphohistidine; by EI modification is found at His175. The tract at residues Ala274 to Ala838 is PTS EI. His460 functions as the Tele-phosphohistidine intermediate; for PTS EI activity in the catalytic mechanism. A Phosphohistidine; by autocatalysis modification is found at His460. Arg567 and Arg603 together coordinate phosphoenolpyruvate. 2 residues coordinate Mg(2+): Glu697 and Asp721. Phosphoenolpyruvate-binding positions include Asn720–Asp721 and Arg731. The Proton donor role is filled by Cys768.

This sequence belongs to the PEP-utilizing enzyme family. Requires Mg(2+) as cofactor.

It is found in the cytoplasm. The enzyme catalyses L-histidyl-[protein] + phosphoenolpyruvate = N(pros)-phospho-L-histidyl-[protein] + pyruvate. The phosphoenolpyruvate-dependent sugar phosphotransferase system (sugar PTS), a major carbohydrate active transport system, catalyzes the phosphorylation of incoming sugar substrates concomitantly with their translocation across the cell membrane. The enzyme II FruAB PTS system is involved in fructose transport. This is Multiphosphoryl transfer protein from Xanthomonas campestris pv. campestris (strain ATCC 33913 / DSM 3586 / NCPPB 528 / LMG 568 / P 25).